A 147-amino-acid polypeptide reads, in one-letter code: MVEWTAAERRHVEAVWSKIDIDVCGPLALQRCLIVYPWTQRYFGEFGDLSTDAAIVGNPKVAAHGVVALTGLRTALDHMDEIKSTYAALSVLHSEKLHVDPDNFRLLCECLTIVVAGKMGKKLSPEMQAAWQKYLCAVVSALGRQYH.

The Globin domain occupies 3-147; sequence EWTAAERRHV…VVSALGRQYH (145 aa). Heme b contacts are provided by H64 and H93.

It belongs to the globin family. In terms of assembly, hb 1 is a heterotetramer of two alpha-1 and two beta-1 chains. Red blood cells.

In terms of biological role, involved in oxygen transport from gills to the various peripheral tissues. This is Hemoglobin subunit beta-1 (hbb1) from Gadus morhua (Atlantic cod).